Reading from the N-terminus, the 226-residue chain is UPF0319 protein YpAngola_A3206 (226 aa).

Positions 1 to 20 (MKLGLVAGMLAVCFSFSSVA) are cleaved as a signal peptide.

Belongs to the UPF0319 family.

The polypeptide is UPF0319 protein YpAngola_A3206 (Yersinia pestis bv. Antiqua (strain Angola)).